Reading from the N-terminus, the 131-residue chain is Profilin-2 (131 aa).

Belongs to the profilin family. In terms of assembly, occurs in many kinds of cells as a complex with monomeric actin in a 1:1 ratio. Expressed in the intestinal wall, the spermatheca, and the pharynx.

Its subcellular location is the cytoplasm. The protein resides in the cytoskeleton. Functionally, binds to actin and affects the structure of the cytoskeleton. At high concentrations, profilin prevents the polymerization of actin, whereas it enhances it at low concentrations. By binding to PIP2, it inhibits the formation of IP3 and DG. This Caenorhabditis elegans protein is Profilin-2 (pfn-2).